The sequence spans 274 residues: MKKILLLHMLVFVSATLPISSVASDEVETLKCTIIADAITGNTLYETGECARRVSPCSSFKLPLAIMGFDSGILQSPKSPTWELKPEYNPSPRDRTYKQVYPALWQSDSVVWFSQQLTSRLGVDRFTEYVKKFEYGNQDVSGDSGKHNGLTQSWLMSSLTISPKEQIQFLLRFVAHKLPVSEAAYDMAYATIPQYQAAEGWAVHGKSGSGWLRDNNGKINESRPQGWFVGWAEKNGRQVVFARLEIGKEKSDIPGGSKAREDILVELPVLMGNK.

An N-terminal signal peptide occupies residues 1 to 24 (MKKILLLHMLVFVSATLPISSVAS). The active-site Acyl-ester intermediate is Ser-58. At Lys-61 the chain carries N6-carboxylysine. Residue 206–208 (KSG) coordinates substrate.

Belongs to the class-D beta-lactamase family.

It catalyses the reaction a beta-lactam + H2O = a substituted beta-amino acid. Its function is as follows. Oxacillin-hydrolyzing beta-lactamase. Confers resistance to beta-lactam antibiotics but at a significantly lower level than the TEM bla gene product. This Klebsiella aerogenes (Enterobacter aerogenes) protein is Beta-lactamase OXA-9 (bla).